We begin with the raw amino-acid sequence, 378 residues long: Probable pectin lyase C (378 aa).

The signal sequence occupies residues 1–18 (MKVPFLQLLCLNAALASA). 2 disulfide bridges follow: Cys-81-Cys-100 and Cys-90-Cys-220. An N-linked (GlcNAc...) asparagine glycan is attached at Asn-123. Arg-250 is an active-site residue. Cys-316 and Cys-324 form a disulfide bridge.

Belongs to the polysaccharide lyase 1 family.

It localises to the secreted. The catalysed reaction is Eliminative cleavage of (1-&gt;4)-alpha-D-galacturonan methyl ester to give oligosaccharides with 4-deoxy-6-O-methyl-alpha-D-galact-4-enuronosyl groups at their non-reducing ends.. In terms of biological role, pectinolytic enzymes consist of four classes of enzymes: pectin lyase, polygalacturonase, pectin methylesterase and rhamnogalacturonase. Among pectinolytic enzymes, pectin lyase is the most important in depolymerization of pectin, since it cleaves internal glycosidic bonds of highly methylated pectins. This is Probable pectin lyase C (pelC) from Aspergillus niger.